Here is a 1206-residue protein sequence, read N- to C-terminus: STE20-like serine/threonine-protein kinase (1206 aa).

At Ser-14 the chain carries Phosphoserine. The Protein kinase domain maps to 34–292 (WEIIGELGDG…TSQLLQHPFV (259 aa)). ATP is bound by residues 40 to 48 (LGDGAFGKV) and Lys-63. Asp-155 acts as the Proton acceptor in catalysis. Thr-183 is subject to Phosphothreonine. Ser-189 is subject to Phosphoserine. Positions 308–352 (KAEVTEEVEDGKEEDDDDETESALPIPANKRASSDLSIASSEEDK) are disordered. Residues 312 to 328 (TEEVEDGKEEDDDDETE) show a composition bias toward acidic residues. A phosphoserine mark is found at Ser-340, Ser-341, Ser-344, Ser-347, Ser-348, Ser-354, and Ser-372. Positions 364–440 (SERTEHNTSG…ESQPDTEDQQ (77 aa)) are disordered. 2 stretches are compositionally biased toward basic and acidic residues: residues 381 to 395 (LSEK…KTVD) and 420 to 429 (ENGREKKRPQ). Positions 468–492 (EEDRNEENQEIIENKLTQSEEIKDI) form a coiled coil. 2 disordered regions span residues 515-761 (DNEV…SSSD) and 773-792 (TKDS…KTLK). Residues 520 to 536 (FTKEETQEKLGKDDKTH) are compositionally biased toward basic and acidic residues. A phosphoserine mark is found at Ser-545 and Ser-563. Over residues 556–565 (TQKSAEQSQD) the composition is skewed to polar residues. Residues 584–609 (KATEGPEAHGAEEEPRSGERVEDKQL) are compositionally biased toward basic and acidic residues. The span at 634-643 (EEPETDEVDQ) shows a compositional bias: acidic residues. Phosphoserine is present on residues Ser-645, Ser-649, and Ser-668. Residues 691-702 (AEPQAPAASQAS) show a composition bias toward low complexity. Residues 747 to 757 (TDSGTGSTVEN) show a composition bias toward polar residues. Phosphoserine is present on residues Ser-776 and Ser-778. Thr-813 is subject to Phosphothreonine. Phosphoserine is present on Ser-817. Positions 825–1037 (LRRQELRELR…LKNRQTQERA (213 aa)) form a coiled coil. A UVR domain is found at 874–909 (DQEIENLEKQQKQTIERLEQEHTNRLRDEAKRIKGE). A Phosphothreonine modification is found at Thr-1065. Positions 1077–1151 (AAQEEKRQKN…ELKEWREKLR (75 aa)) form a coiled coil. Basic and acidic residues predominate over residues 1079–1099 (QEEKRQKNERMAQHQKHESQM). Disordered stretches follow at residues 1079–1100 (QEEK…SQMR) and 1181–1206 (LNPS…AWAG). A compositionally biased stretch (polar residues) spans 1181–1200 (LNPSAQSRGCLQTSHPSSTR).

Belongs to the protein kinase superfamily. STE Ser/Thr protein kinase family. STE20 subfamily. Proteolytically cleaved by caspase-3. Post-translationally, autophosphorylated.

The protein localises to the cytoplasm. It carries out the reaction L-seryl-[protein] + ATP = O-phospho-L-seryl-[protein] + ADP + H(+). The enzyme catalyses L-threonyl-[protein] + ATP = O-phospho-L-threonyl-[protein] + ADP + H(+). Its function is as follows. Mediates apoptosis and actin stress fiber dissolution. The sequence is that of STE20-like serine/threonine-protein kinase (Slk) from Rattus norvegicus (Rat).